We begin with the raw amino-acid sequence, 1266 residues long: Rho GTPase-activating protein 29 (1266 aa).

Residues Ser171, Ser176, Ser179, and Ser190 each carry the phosphoserine modification. The 271-residue stretch at 192–462 folds into the F-BAR domain; it reads IELDNLLLKN…SAKLYDPGQE (271 aa). A coiled-coil region spans residues 296-418; that stretch reads RKNEMEKQRK…EILTQLRTLV (123 aa). The segment at 482–501 is disordered; sequence NVNKQMTNSPQTSGYEPADS. Polar residues predominate over residues 483 to 495; it reads VNKQMTNSPQTSG. A phosphoserine mark is found at Ser501, Ser521, and Ser554. Residues 542 to 561 are compositionally biased toward low complexity; it reads DSESTGGSSESRSLDSESIS. Positions 542 to 601 are disordered; sequence DSESTGGSSESRSLDSESISPGDFHRKLPRTPSSGTMSSADDLDEREPPSPSEAGPNSLG. A Phorbol-ester/DAG-type zinc finger spans residues 614–659; sequence THKFRKLRSPTKCRDCDGIVMFPGVECEECLLVCHRKCLENLVIIC. The Rho-GAP domain maps to 673–888; that stretch reads AEFIQVAKKE…FLITYSQKIF (216 aa). A phosphoserine mark is found at Ser920, Ser956, and Ser1028. Disordered regions lie at residues 1039-1081, 1116-1157, and 1209-1266; these read SSPT…KVNG, GLTV…ATAV, and KSDP…PQFV. Over residues 1072 to 1081 the composition is skewed to polar residues; it reads SNTTRSKVNG. Basic and acidic residues predominate over residues 1124 to 1136; that stretch reads NRDHPGSKAHAEP. Phosphoserine is present on residues Ser1149 and Ser1151. The segment covering 1256 to 1266 has biased composition (acidic residues); it reads EDLEDEIPQFV. An interaction with PTPN13/PTPL1 region spans residues 1263–1266; it reads PQFV.

Interacts with PTPN13/PTPL1. Interacts with RAP2A via its coiled coil domain. Interacts with RASIP1.

Its function is as follows. GTPase activator for the Rho-type GTPases by converting them to an inactive GDP-bound state. Has strong activity toward RHOA, and weaker activity toward RAC1 and CDC42. May act as a specific effector of RAP2A to regulate Rho. In concert with RASIP1, suppresses RhoA signaling and dampens ROCK and MYH9 activities in endothelial cells and plays an essential role in blood vessel tubulogenesis. This chain is Rho GTPase-activating protein 29 (Arhgap29), found in Mus musculus (Mouse).